A 172-amino-acid chain; its full sequence is S-ribosylhomocysteine lyase (172 aa).

Fe cation-binding residues include His-54, His-58, and Cys-128.

Belongs to the LuxS family. As to quaternary structure, homodimer. The cofactor is Fe cation.

It catalyses the reaction S-(5-deoxy-D-ribos-5-yl)-L-homocysteine = (S)-4,5-dihydroxypentane-2,3-dione + L-homocysteine. In terms of biological role, involved in the synthesis of autoinducer 2 (AI-2) which is secreted by bacteria and is used to communicate both the cell density and the metabolic potential of the environment. The regulation of gene expression in response to changes in cell density is called quorum sensing. Catalyzes the transformation of S-ribosylhomocysteine (RHC) to homocysteine (HC) and 4,5-dihydroxy-2,3-pentadione (DPD). The polypeptide is S-ribosylhomocysteine lyase (Vibrio parahaemolyticus serotype O3:K6 (strain RIMD 2210633)).